The following is a 336-amino-acid chain: Eukaryotic translation initiation factor 3 subunit I (336 aa).

WD repeat units follow at residues 8–47 (GHERSLTQIKFNRDGDLLFSVSKDKIVCAWWTANGERLGT), 50–91 (GHLG…KVWE), 146–185 (CNESKATVAGWSYLGKYIIAGHEDGSVSQYDAKTGDQLEN), 190–229 (EFDHQINDIQFSADRTYFITASKDKSAKLISSRNLAILKT), and 287–326 (GHFGPLNTVGVHPNGTAYASGGEDGYVRVHHFDKPYFDFM).

It belongs to the eIF-3 subunit I family. Component of the eukaryotic translation initiation factor 3 (eIF-3) complex.

Its subcellular location is the cytoplasm. In terms of biological role, component of the eukaryotic translation initiation factor 3 (eIF-3) complex, which is involved in protein synthesis of a specialized repertoire of mRNAs and, together with other initiation factors, stimulates binding of mRNA and methionyl-tRNAi to the 40S ribosome. The eIF-3 complex specifically targets and initiates translation of a subset of mRNAs involved in cell proliferation. The polypeptide is Eukaryotic translation initiation factor 3 subunit I (tif34) (Aspergillus terreus (strain NIH 2624 / FGSC A1156)).